A 100-amino-acid chain; its full sequence is Cobalt transport protein CbiN (100 aa).

The next 2 membrane-spanning stretches (helical) occupy residues leucine 8 to valine 28 and leucine 69 to tyrosine 89.

The protein belongs to the CbiN family. As to quaternary structure, forms an energy-coupling factor (ECF) transporter complex composed of an ATP-binding protein (A component, CbiO), a transmembrane protein (T component, CbiQ) and 2 possible substrate-capture proteins (S components, CbiM and CbiN) of unknown stoichimetry.

It localises to the cell inner membrane. It functions in the pathway cofactor biosynthesis; adenosylcobalamin biosynthesis. In terms of biological role, part of the energy-coupling factor (ECF) transporter complex CbiMNOQ involved in cobalt import. This is Cobalt transport protein CbiN from Nostoc sp. (strain PCC 7120 / SAG 25.82 / UTEX 2576).